Consider the following 276-residue polypeptide: NH(3)-dependent NAD(+) synthetase (276 aa).

Residue 43–50 participates in ATP binding; sequence GISGGVDS. Asp49 is a binding site for Mg(2+). Arg146 is a deamido-NAD(+) binding site. Thr166 contributes to the ATP binding site. Position 171 (Glu171) interacts with Mg(2+). Residues Lys179 and Asp186 each contribute to the deamido-NAD(+) site. ATP contacts are provided by Lys195 and Thr217. Position 266–267 (266–267) interacts with deamido-NAD(+); sequence HK.

Belongs to the NAD synthetase family. Homodimer.

The enzyme catalyses deamido-NAD(+) + NH4(+) + ATP = AMP + diphosphate + NAD(+) + H(+). It participates in cofactor biosynthesis; NAD(+) biosynthesis; NAD(+) from deamido-NAD(+) (ammonia route): step 1/1. Catalyzes the ATP-dependent amidation of deamido-NAD to form NAD. Uses ammonia as a nitrogen source. The polypeptide is NH(3)-dependent NAD(+) synthetase (Vibrio atlanticus (strain LGP32) (Vibrio splendidus (strain Mel32))).